A 184-amino-acid chain; its full sequence is Glutathione-regulated potassium-efflux system ancillary protein KefG (184 aa).

This sequence belongs to the NAD(P)H dehydrogenase (quinone) family. KefG subfamily. As to quaternary structure, interacts with KefB.

The protein localises to the cell inner membrane. The catalysed reaction is a quinone + NADH + H(+) = a quinol + NAD(+). It catalyses the reaction a quinone + NADPH + H(+) = a quinol + NADP(+). Regulatory subunit of a potassium efflux system that confers protection against electrophiles. Required for full activity of KefB. The sequence is that of Glutathione-regulated potassium-efflux system ancillary protein KefG from Erwinia tasmaniensis (strain DSM 17950 / CFBP 7177 / CIP 109463 / NCPPB 4357 / Et1/99).